The primary structure comprises 193 residues: MSFELPALPYAKDALAPHISAETLEYHYGKHHQTYVTNLNNLIKGTAFEGKSLEEIVRTSEGGIFNNAAQVWNHTFYWNCLAPNAGGEPTGKLADAIAASFGSFAEFKAQFTDAAIKNFGSGWTWLVKSADGKLAIVSTSNAGTPLTTDATPLLTVDVWEHAYYIDYRNARPNYLEHFWALVNWEFVAKNLAA.

Residues histidine 27, histidine 74, aspartate 157, and histidine 161 each contribute to the Fe cation site.

It belongs to the iron/manganese superoxide dismutase family. In terms of assembly, homodimer. Fe cation is required as a cofactor.

It catalyses the reaction 2 superoxide + 2 H(+) = H2O2 + O2. In terms of biological role, destroys superoxide anion radicals which are normally produced within the cells and which are toxic to biological systems. The polypeptide is Superoxide dismutase [Fe] (sodB) (Salmonella typhimurium (strain LT2 / SGSC1412 / ATCC 700720)).